The following is a 61-amino-acid chain: MRCVAIFLVVICAFVLQALAEVQCPASGASDQDNLDFCMEYPELIEKCELKSCEGFIKVVS.

An N-terminal signal peptide occupies residues 1 to 20 (MRCVAIFLVVICAFVLQALA).

Expressed by the venom gland.

Its subcellular location is the secreted. The polypeptide is Small venom protein 1 (Pimpla hypochondriaca (Parasitoid wasp)).